Consider the following 148-residue polypeptide: Deoxyuridine 5'-triphosphate nucleotidohydrolase (148 aa).

Substrate-binding positions include Arg67 to Gly69, Asn80, Leu84 to Asp86, and Met94.

Belongs to the dUTPase family. The cofactor is Mg(2+).

It carries out the reaction dUTP + H2O = dUMP + diphosphate + H(+). It functions in the pathway pyrimidine metabolism; dUMP biosynthesis; dUMP from dCTP (dUTP route): step 2/2. In terms of biological role, this enzyme is involved in nucleotide metabolism: it produces dUMP, the immediate precursor of thymidine nucleotides and it decreases the intracellular concentration of dUTP so that uracil cannot be incorporated into DNA. In Paraburkholderia xenovorans (strain LB400), this protein is Deoxyuridine 5'-triphosphate nucleotidohydrolase.